The following is a 206-amino-acid chain: Ribosomal RNA large subunit methyltransferase E (206 aa).

Residues Gly60, Trp62, Asp80, Asp96, and Asp121 each coordinate S-adenosyl-L-methionine. Lys161 acts as the Proton acceptor in catalysis.

The protein belongs to the class I-like SAM-binding methyltransferase superfamily. RNA methyltransferase RlmE family.

Its subcellular location is the cytoplasm. The enzyme catalyses uridine(2552) in 23S rRNA + S-adenosyl-L-methionine = 2'-O-methyluridine(2552) in 23S rRNA + S-adenosyl-L-homocysteine + H(+). Its function is as follows. Specifically methylates the uridine in position 2552 of 23S rRNA at the 2'-O position of the ribose in the fully assembled 50S ribosomal subunit. The chain is Ribosomal RNA large subunit methyltransferase E from Stutzerimonas stutzeri (strain A1501) (Pseudomonas stutzeri).